Consider the following 160-residue polypeptide: Cyanate hydratase (160 aa).

Catalysis depends on residues R100, E103, and S126.

The protein belongs to the cyanase family.

The enzyme catalyses cyanate + hydrogencarbonate + 3 H(+) = NH4(+) + 2 CO2. Catalyzes the reaction of cyanate with bicarbonate to produce ammonia and carbon dioxide. The sequence is that of Cyanate hydratase from Aspergillus flavus (strain ATCC 200026 / FGSC A1120 / IAM 13836 / NRRL 3357 / JCM 12722 / SRRC 167).